A 156-amino-acid polypeptide reads, in one-letter code: Cell division protein SepF (156 aa).

Residues 17–44 form a disordered region; it reads PETADYYEDQQPAQQAPAPVPTPAPTRS.

This sequence belongs to the SepF family. In terms of assembly, homodimer. Interacts with FtsZ.

It is found in the cytoplasm. Its function is as follows. Cell division protein that is part of the divisome complex and is recruited early to the Z-ring. Probably stimulates Z-ring formation, perhaps through the cross-linking of FtsZ protofilaments. Its function overlaps with FtsA. The chain is Cell division protein SepF from Limosilactobacillus fermentum (strain NBRC 3956 / LMG 18251) (Lactobacillus fermentum).